Consider the following 117-residue polypeptide: Large ribosomal subunit protein bL20 (117 aa).

Belongs to the bacterial ribosomal protein bL20 family.

Its function is as follows. Binds directly to 23S ribosomal RNA and is necessary for the in vitro assembly process of the 50S ribosomal subunit. It is not involved in the protein synthesizing functions of that subunit. The polypeptide is Large ribosomal subunit protein bL20 (Acetivibrio thermocellus (strain ATCC 27405 / DSM 1237 / JCM 9322 / NBRC 103400 / NCIMB 10682 / NRRL B-4536 / VPI 7372) (Clostridium thermocellum)).